Consider the following 118-residue polypeptide: Large ribosomal subunit protein uL18 (118 aa).

It belongs to the universal ribosomal protein uL18 family. Part of the 50S ribosomal subunit; part of the 5S rRNA/L5/L18/L25 subcomplex. Contacts the 5S and 23S rRNAs.

In terms of biological role, this is one of the proteins that bind and probably mediate the attachment of the 5S RNA into the large ribosomal subunit, where it forms part of the central protuberance. The protein is Large ribosomal subunit protein uL18 of Sulfurovum sp. (strain NBC37-1).